Here is a 1006-residue protein sequence, read N- to C-terminus: Unconventional myosin-Id (1006 aa).

A2 carries the post-translational modification N-acetylalanine. The region spanning 9 to 695 (FGKADFVLMD…TLFTLEELRA (687 aa)) is the Myosin motor domain. Residue 102 to 109 (GESGAGKT) coordinates ATP. At S200 the chain carries Phosphoserine. Y536 carries the post-translational modification Phosphotyrosine. The tract at residues 572–594 (MIALVDNLASKEPYYVRCIKPND) is actin-binding. 2 IQ domains span residues 699–719 (VRVVLFLQKVWRGTLARMRYK) and 721–741 (TKAALTIIRYYRRYKVKSYIH). Residues 812–1005 (GQRADLGLQR…RSGFILSVPG (194 aa)) form the TH1 domain.

It belongs to the TRAFAC class myosin-kinesin ATPase superfamily. Myosin family. As to quaternary structure, interacts (via the two IQ motifs) with calmodulin. Binds an additional calmodulin chain via a third, C-terminal region. Interacts with F-actin. In terms of tissue distribution, detected in enterocytes at the intestinal brush border membrane. Detected at the tip of intestinal microvilli (at protein level).

Its subcellular location is the cytoplasm. The protein resides in the perikaryon. It localises to the cell projection. It is found in the dendrite. The protein localises to the early endosome. Its subcellular location is the cell cortex. The protein resides in the basolateral cell membrane. Functionally, unconventional myosin that functions as actin-based motor protein with ATPase activity. Plays a role in endosomal protein trafficking, and especially in the transfer of cargo proteins from early to recycling endosomes. Required for normal planar cell polarity in ciliated tracheal cells, for normal rotational polarity of cilia, and for coordinated, unidirectional ciliary movement in the trachea. Required for normal, polarized cilia organization in brain ependymal epithelial cells. This Mus musculus (Mouse) protein is Unconventional myosin-Id.